An 836-amino-acid polypeptide reads, in one-letter code: Protein translocase subunit SecA (836 aa).

Residues Gln85, 103–107 (GEGKT), and Asp492 contribute to the ATP site. Residues Cys820, Cys822, Cys831, and Cys832 each contribute to the Zn(2+) site.

It belongs to the SecA family. As to quaternary structure, monomer and homodimer. Part of the essential Sec protein translocation apparatus which comprises SecA, SecYEG and auxiliary proteins SecDF. Other proteins may also be involved. Requires Zn(2+) as cofactor.

It localises to the cell membrane. Its subcellular location is the cytoplasm. The catalysed reaction is ATP + H2O + cellular proteinSide 1 = ADP + phosphate + cellular proteinSide 2.. Functionally, part of the Sec protein translocase complex. Interacts with the SecYEG preprotein conducting channel. Has a central role in coupling the hydrolysis of ATP to the transfer of proteins into and across the cell membrane, serving as an ATP-driven molecular motor driving the stepwise translocation of polypeptide chains across the membrane. In Clostridium botulinum (strain Alaska E43 / Type E3), this protein is Protein translocase subunit SecA.